Consider the following 90-residue polypeptide: Small ribosomal subunit protein uS15c (90 aa).

It belongs to the universal ribosomal protein uS15 family. In terms of assembly, part of the 30S ribosomal subunit.

The protein localises to the plastid. It is found in the chloroplast. This is Small ribosomal subunit protein uS15c (rps15) from Secale cereale (Rye).